Consider the following 395-residue polypeptide: Flagellin A (395 aa).

This sequence belongs to the bacterial flagellin family.

Its subcellular location is the secreted. The protein resides in the bacterial flagellum. Functionally, flagellin is the subunit protein which polymerizes to form the filaments of bacterial flagella. Homomer of FlaA is able to form a functional filament. The sequence is that of Flagellin A (flaA) from Rhizobium meliloti (Ensifer meliloti).